The primary structure comprises 190 residues: Adenylate kinase (190 aa).

10–15 (AAGKGT) serves as a coordination point for ATP. The segment at 30 to 59 (STGDMLRAAIASGSELGQRVSGIMERGELV) is NMP. AMP is bound by residues threonine 31, arginine 36, 57 to 59 (ELV), 85 to 88 (GFPR), and glutamine 92. The LID stretch occupies residues 126 to 136 (GRFAESGRADD). Arginine 127 contacts ATP. AMP contacts are provided by arginine 133 and arginine 144. Glycine 172 serves as a coordination point for ATP.

The protein belongs to the adenylate kinase family. As to quaternary structure, monomer.

It localises to the cytoplasm. The catalysed reaction is AMP + ATP = 2 ADP. The protein operates within purine metabolism; AMP biosynthesis via salvage pathway; AMP from ADP: step 1/1. In terms of biological role, catalyzes the reversible transfer of the terminal phosphate group between ATP and AMP. Plays an important role in cellular energy homeostasis and in adenine nucleotide metabolism. This chain is Adenylate kinase, found in Phenylobacterium zucineum (strain HLK1).